The primary structure comprises 226 residues: Ras-related protein RGP1 (226 aa).

25-32 (GDSAVGKS) contributes to the GTP binding site. The Effector region signature appears at 47-55 (SKATIGVEF). GTP is bound by residues 73 to 77 (DTAGQ) and 131 to 134 (NKSD). 2 S-geranylgeranyl cysteine lipidation sites follow: cysteine 223 and cysteine 224.

Belongs to the small GTPase superfamily. Rab family.

The protein resides in the cell membrane. May play an important role in plant growth and development. This is Ras-related protein RGP1 (RGP1) from Oryza sativa subsp. japonica (Rice).